The chain runs to 428 residues: Histidinol dehydrogenase (428 aa).

NAD(+) is bound by residues Y127, Q185, and N208. Substrate is bound by residues S232, Q254, and H257. Q254 and H257 together coordinate Zn(2+). Residues E321 and H322 each act as proton acceptor in the active site. Positions 322, 355, 409, and 414 each coordinate substrate. D355 contacts Zn(2+). H414 is a Zn(2+) binding site.

The protein belongs to the histidinol dehydrogenase family. It depends on Zn(2+) as a cofactor.

The catalysed reaction is L-histidinol + 2 NAD(+) + H2O = L-histidine + 2 NADH + 3 H(+). Its pathway is amino-acid biosynthesis; L-histidine biosynthesis; L-histidine from 5-phospho-alpha-D-ribose 1-diphosphate: step 9/9. Its function is as follows. Catalyzes the sequential NAD-dependent oxidations of L-histidinol to L-histidinaldehyde and then to L-histidine. This is Histidinol dehydrogenase from Pasteurella multocida (strain Pm70).